Here is a 1480-residue protein sequence, read N- to C-terminus: Nonribosomal peptide synthetase-like enzyme fsqF (1480 aa).

Positions 31–59 (SPFADEPSIDVPSTHLPVVTPRSKTANDR) are disordered. Residues 132–527 (DSARATPHAP…VGRTDDQVKY (396 aa)) form an adenylation domain region. The Carrier domain occupies 662–741 (STARTIAREY…SIASLIDANS (80 aa)). O-(pantetheine 4'-phosphoryl)serine is present on S700. Over residues 739 to 754 (ANSSPGRGQPLNTQET) the composition is skewed to polar residues. A disordered region spans residues 739–773 (ANSSPGRGQPLNTQETARLPLRSNGPAPSQQALER). Residues 780-1003 (LTGASGFLGI…ACVELGFYNG (224 aa)) are NAD-binding domain. An aminotransferase domain region spans residues 1100–1465 (NAAGTVVHRE…YNTVAEVQEF (366 aa)).

This sequence belongs to the NRP synthetase family.

The protein operates within secondary metabolite biosynthesis. Functionally, nonribosomal peptide synthetase-like enzyme; part of the gene cluster that mediates the biosynthesis of the isoquinoline alkaloids fumisoquin A, fumisoquin B and fumisoquin C; as well as small amounts of fumipyrrole as a shunt metabolite. The products of the cluster lead to a brown coloration and are important for growth and conidiation. The nonribosomal peptide synthetase-like protein fsqF, which lacks a canonical condensation domain, is required for addition of a serine-derived dehydroalanine moiety to activated tyrosine but is not essential for the subsequent steps leading to isoquinoline formation. A different enzyme, most likely the ATP-grasp enzyme fsqD, is responsible for activation of tyrosine. Three additional enzymes encoded by the fsq cluster, the N-methyltransferase fsqC, the phenol 2-monooxygenase fsqG and the FAD-dependent oxidase fsqB, catalyze the formation of the isoquinoline ring system in the fumisoquins. FsqB converts the fspF thiolation domain-bound (2S,4S,5S)-2-amino-6-(3,4-dihydroxyphenyl)-4-hydroxy-5-(methylamino)hexanoyl into isoquinoline. The cyclization most likely proceeds via a two-step mechanism, beginning with FAD-dependent oxidation of the methyl group to an iminium species followed by electrophilic attack on the deprotonated phenol. The polypeptide is Nonribosomal peptide synthetase-like enzyme fsqF (Aspergillus fumigatus (strain ATCC MYA-4609 / CBS 101355 / FGSC A1100 / Af293) (Neosartorya fumigata)).